An 88-amino-acid polypeptide reads, in one-letter code: Large ribosomal subunit protein bL31B (88 aa).

This sequence belongs to the bacterial ribosomal protein bL31 family. Type B subfamily. Part of the 50S ribosomal subunit.

The polypeptide is Large ribosomal subunit protein bL31B (Herminiimonas arsenicoxydans).